A 122-amino-acid polypeptide reads, in one-letter code: MARIAGVNIPTNKRVLIALQYIHGIGQKNAADILEKVKIPLDRRVNQLSDAEVLQIREVIDRDYLVEGDLRRETGMNIKRLMDLGCYRGLRHRRGLPVRGQRTHTNARTRKGPAKAIAGKKK.

A disordered region spans residues 99-122 (RGQRTHTNARTRKGPAKAIAGKKK).

This sequence belongs to the universal ribosomal protein uS13 family. In terms of assembly, part of the 30S ribosomal subunit. Forms a loose heterodimer with protein S19. Forms two bridges to the 50S subunit in the 70S ribosome.

Located at the top of the head of the 30S subunit, it contacts several helices of the 16S rRNA. In the 70S ribosome it contacts the 23S rRNA (bridge B1a) and protein L5 of the 50S subunit (bridge B1b), connecting the 2 subunits; these bridges are implicated in subunit movement. Contacts the tRNAs in the A and P-sites. This is Small ribosomal subunit protein uS13 from Rhodopseudomonas palustris (strain TIE-1).